The sequence spans 411 residues: Elongation factor 1-gamma (411 aa).

Residues 3-84 (LTLWSGVNPE…HIARLDRSGG (82 aa)) form the GST N-terminal domain. Residues 90-216 (TPLEGSQVDM…QGATFGAREG (127 aa)) form the GST C-terminal domain. Residues 212–265 (GAREGGAKGQGRGCARPGREEAERAAAAADGAEEEDEAPREKKKPNPLDELPPS) are disordered. A compositionally biased stretch (gly residues) spans 214–223 (REGGAKGQGR). Positions 255 to 411 (KPNPLDELPP…RPVLEGRVFK (157 aa)) constitute an EF-1-gamma C-terminal domain.

As to quaternary structure, EF-1 is composed of four subunits: alpha, beta, delta, and gamma.

Functionally, probably plays a role in anchoring the complex to other cellular components. This Trypanosoma cruzi protein is Elongation factor 1-gamma.